The following is a 107-amino-acid chain: MDSLASGRWRRRRTEELPAAGDAKRACRRSEPGGYECSGHMLTTCALLSWSTEDQEPRPRGLPASQPDCSQERLSSMVLQNGGRSSAQPCLRCISGESGHFNHTDNH.

Positions 1 to 32 (MDSLASGRWRRRRTEELPAAGDAKRACRRSEP) are disordered. Residues 22-31 (DAKRACRRSE) show a composition bias toward basic and acidic residues.

This is an uncharacterized protein from Mus musculus (Mouse).